The primary structure comprises 98 residues: Integration host factor subunit alpha (98 aa).

The tract at residues Phe-49–Asp-70 is disordered.

The protein belongs to the bacterial histone-like protein family. As to quaternary structure, heterodimer of an alpha and a beta chain.

This protein is one of the two subunits of integration host factor, a specific DNA-binding protein that functions in genetic recombination as well as in transcriptional and translational control. This is Integration host factor subunit alpha from Serratia proteamaculans (strain 568).